A 478-amino-acid chain; its full sequence is Probable cytosolic Fe-S cluster assembly factor AGAP009023 (478 aa).

[4Fe-4S] cluster contacts are provided by cysteine 23, cysteine 69, cysteine 72, cysteine 75, cysteine 189, cysteine 245, cysteine 396, and cysteine 400.

Belongs to the NARF family.

Component of the cytosolic iron-sulfur (Fe/S) protein assembly machinery. Required for maturation of extramitochondrial Fe/S proteins. In Anopheles gambiae (African malaria mosquito), this protein is Probable cytosolic Fe-S cluster assembly factor AGAP009023.